A 541-amino-acid chain; its full sequence is Transcription termination factor MTERF4, chloroplastic (541 aa).

The transit peptide at 1–45 (MKIRFCNGFTKPGFLLVHFEPPSFFAVRSRSLSDSTYGNLCNHKK) directs the protein to the chloroplast. 2 disordered regions span residues 66–103 (SRSLDSPRRERSSRSSSSSGRDRDRDKDKGRDSKSLYS) and 503–541 (EVETDPSSFDMNTLMQPEREEESDSEYEEEEDDDDEEFA). Basic and acidic residues predominate over residues 85 to 99 (GRDRDRDKDKGRDSK). Polar residues predominate over residues 507–517 (DPSSFDMNTLM). The segment covering 521 to 541 (REEESDSEYEEEEDDDDEEFA) has biased composition (acidic residues).

Belongs to the mTERF family.

It is found in the plastid. The protein localises to the chloroplast. Its subcellular location is the mitochondrion. Transcription termination factor required for processing and steady-state levels of plastid transcripts. Required for splicing of the chloroplastic Clp protease (ClpP) group IIa intron. Required for maturation of 16S rRNA and 23S rRNA in the chloroplast. Essential for embryogenesis. Required for the maintenance of the correct levels of transcripts in the mitochondria and chloroplasts. In Arabidopsis thaliana (Mouse-ear cress), this protein is Transcription termination factor MTERF4, chloroplastic.